Consider the following 149-residue polypeptide: uncharacterized protein (149 aa).

Residues 2–146 (LEVKTISVED…NHIVMYKTLR (145 aa)) form the N-acetyltransferase domain.

Belongs to the acetyltransferase family.

This is an uncharacterized protein from Bacillus subtilis (strain 168).